A 191-amino-acid polypeptide reads, in one-letter code: Putative resolvase L103 (191 aa).

The segment at residues 11–30 (LEVLKVHYQTLYRMEEKGLI) is a DNA-binding region (H-T-H motif). The region spanning 59 to 191 (KGICYCRVSS…KKSGKLKAKK (133 aa)) is the Resolvase/invertase-type recombinase catalytic domain. Positions 65 to 91 (RVSSKKQIKDLNRQVEYMEKNYPEYEI) form a coiled coil. Catalysis depends on S67, which acts as the O-(5'-phospho-DNA)-serine intermediate.

It belongs to the site-specific recombinase resolvase family.

Resolvase catalyzes the resolution (a site-specific recombination) of the cointegrated replicon to yield the final transposition products. The chain is Putative resolvase L103 from Acanthamoeba polyphaga (Amoeba).